A 696-amino-acid polypeptide reads, in one-letter code: Polyribonucleotide nucleotidyltransferase (696 aa).

Mg(2+) contacts are provided by Asp-489 and Asp-495. Residues 556–615 enclose the KH domain; the sequence is PQYVTMKINPEKIRDVIGKGGVVIREITEATNCAIDISDDGTIKIAAHTTEEGEAAKRRI. The S1 motif domain occupies 625 to 693; that stretch reads GKVYEGTVVK…RQGRVRLSMK (69 aa).

Belongs to the polyribonucleotide nucleotidyltransferase family. In terms of assembly, component of the RNA degradosome, which is a multiprotein complex involved in RNA processing and mRNA degradation. Requires Mg(2+) as cofactor.

It is found in the cytoplasm. It catalyses the reaction RNA(n+1) + phosphate = RNA(n) + a ribonucleoside 5'-diphosphate. Functionally, involved in mRNA degradation. Catalyzes the phosphorolysis of single-stranded polyribonucleotides processively in the 3'- to 5'-direction. This Coxiella burnetii (strain RSA 331 / Henzerling II) protein is Polyribonucleotide nucleotidyltransferase.